The primary structure comprises 325 residues: MASSSGSKAEFIVGGKYKLVRKIGSGSFGDIYLAINITNGEEVAVKLESQKARHPQLLYESKLYKILQGGVGIPHIRWYGQGKDYNVLVMDLLGPSLEDLFNFCSRRFTMKTVLMLADQMISRIEYVHTKNFIHRDIKPDNFLMGIGRHCNKLFLIDFGLAKKYRDNRTRQHIPYREDKNLTGTARYASINAHLGIEQSRRDDMESLGYVLMYFNRTSLPWQGLKAATKKQKYEKISEKKMSTPVEVLCKGFPAEFAMYLNYCRGLRFEEAPDYMYLRQLFRILFRTLNHQYDYTFDWTMLKQKAAQQAASSSGQGQQAQTPTGF.

N-acetylalanine is present on Ala-2. Ser-4 is subject to Phosphoserine. Residue Lys-8 is modified to N6-acetyllysine. Positions 17 to 285 constitute a Protein kinase domain; that stretch reads YKLVRKIGSG…YLRQLFRILF (269 aa). Residues 23-31 and Lys-46 contribute to the ATP site; that span reads IGSGSFGDI. The active-site Proton acceptor is Asp-136. At Ile-156 the chain carries Phosphoserine.

Belongs to the protein kinase superfamily. CK1 Ser/Thr protein kinase family. Casein kinase I subfamily. Interacts with the Axin complex. Interacts with TUT1, leading to TUT1 phosphorylation. Interacts with FAM83A, FAM83B, FAM83C, FAM83D, FAM83E, FAM83F, FAM83G and FAM83H (via DUF1669). Interaction with FAM83H recruits CSNK1A1 to keratin filaments. Phosphorylated by MTOR in response to mitogenic stimulation, leading to its activation.

It localises to the cytoplasm. Its subcellular location is the cytoskeleton. The protein resides in the microtubule organizing center. The protein localises to the centrosome. It is found in the chromosome. It localises to the centromere. Its subcellular location is the kinetochore. The protein resides in the nucleus speckle. The protein localises to the cilium basal body. It is found in the spindle. It catalyses the reaction L-seryl-[protein] + ATP = O-phospho-L-seryl-[protein] + ADP + H(+). The catalysed reaction is L-threonyl-[protein] + ATP = O-phospho-L-threonyl-[protein] + ADP + H(+). Casein kinases are operationally defined by their preferential utilization of acidic proteins such as caseins as substrates. Can phosphorylate a large number of proteins. Participates in Wnt signaling. Phosphorylates CTNNB1 at 'Ser-45'. May phosphorylate PER1 and PER2. May play a role in segregating chromosomes during mitosis. May play a role in keratin cytoskeleton disassembly and thereby, it may regulate epithelial cell migration. Acts as a positive regulator of mTORC1 and mTORC2 signaling in response to nutrients by mediating phosphorylation of DEPTOR inhibitor. Acts as an inhibitor of NLRP3 inflammasome assembly by mediating phosphorylation of NLRP3. This chain is Casein kinase I isoform alpha (Csnk1a1), found in Rattus norvegicus (Rat).